An 89-amino-acid polypeptide reads, in one-letter code: Dynein light chain (89 aa).

The protein belongs to the dynein light chain family. In terms of tissue distribution, tegument.

Its subcellular location is the cytoplasm. It is found in the cytoskeleton. Its function is as follows. Acts as a non-catalytic accessory component of a dynein complex. The chain is Dynein light chain (DLC) from Schistosoma mansoni (Blood fluke).